The sequence spans 155 residues: Regulatory protein RecX (155 aa).

It belongs to the RecX family.

It is found in the cytoplasm. Modulates RecA activity. In Pseudomonas entomophila (strain L48), this protein is Regulatory protein RecX.